We begin with the raw amino-acid sequence, 222 residues long: MRLILPADTEGIFLERKSRFTGVALVEGKKTLIHIHNTGRLPLLKKGKRVLLKRAESDRRKTGWDLLAVEHRDEFVFVHSGFHSIVAGKILEELFPGSTIESEKRFENSRFDFLIDRRTFVEVKGCTYEEDGVAMFPDAPTERGRRHIEELISSVKSGFKALLLILVFLESDCFLPNRSVDPAFSRVFWRALKSGVNIDVFRVKYDGEYLCSTEKLSICEEV.

It belongs to the SfsA family.

The protein is Sugar fermentation stimulation protein homolog of Thermotoga sp. (strain RQ2).